We begin with the raw amino-acid sequence, 527 residues long: EGF domain-specific O-linked N-acetylglucosamine transferase (527 aa).

The signal sequence occupies residues 1–19 (MLMLLVFGVLLHEVPLSGQ). Positions 295–297 (DYD) match the Required for optimal activity motif. A glycan (N-linked (GlcNAc...) asparagine) is linked at Asn-354. Positions 524–527 (HDEL) match the Prevents secretion from ER motif.

The protein belongs to the glycosyltransferase 61 family. Widely expressed. Expressed in brain, heart, kidney, lung, skeletal muscles and thymus. Highest expression is observed in lung and the lowest in skeletal muscles.

Its subcellular location is the endoplasmic reticulum lumen. It catalyses the reaction L-seryl-[protein] + UDP-N-acetyl-alpha-D-glucosamine = 3-O-(N-acetyl-beta-D-glucosaminyl)-L-seryl-[protein] + UDP + H(+). It carries out the reaction L-threonyl-[protein] + UDP-N-acetyl-alpha-D-glucosamine = 3-O-(N-acetyl-beta-D-glucosaminyl)-L-threonyl-[protein] + UDP + H(+). Catalyzes the transfer of a single N-acetylglucosamine from UDP-GlcNAc to a serine or threonine residue in extracellular proteins resulting in their modification with a beta-linked N-acetylglucosamine (O-GlcNAc). Specifically glycosylates the Thr residue located between the fifth and sixth conserved cysteines of folded EGF-like domains. This chain is EGF domain-specific O-linked N-acetylglucosamine transferase (Eogt), found in Mus musculus (Mouse).